The chain runs to 1385 residues: DNA-directed RNA polymerase subunit beta' (1385 aa).

4 residues coordinate Zn(2+): cysteine 75, cysteine 77, cysteine 90, and cysteine 93. Mg(2+) is bound by residues aspartate 466, aspartate 468, and aspartate 470. Zn(2+) contacts are provided by cysteine 809, cysteine 883, cysteine 890, and cysteine 893.

This sequence belongs to the RNA polymerase beta' chain family. In terms of assembly, the RNAP catalytic core consists of 2 alpha, 1 beta, 1 beta' and 1 omega subunit. When a sigma factor is associated with the core the holoenzyme is formed, which can initiate transcription. Mg(2+) serves as cofactor. The cofactor is Zn(2+).

It catalyses the reaction RNA(n) + a ribonucleoside 5'-triphosphate = RNA(n+1) + diphosphate. Functionally, DNA-dependent RNA polymerase catalyzes the transcription of DNA into RNA using the four ribonucleoside triphosphates as substrates. This chain is DNA-directed RNA polymerase subunit beta', found in Nitratidesulfovibrio vulgaris (strain ATCC 29579 / DSM 644 / CCUG 34227 / NCIMB 8303 / VKM B-1760 / Hildenborough) (Desulfovibrio vulgaris).